We begin with the raw amino-acid sequence, 244 residues long: Glucosamine-6-phosphate deaminase (244 aa).

Catalysis depends on D67, which acts as the Proton acceptor; for enolization step. The For ring-opening step role is filled by N136. The active-site Proton acceptor; for ring-opening step is the H138. Residue E143 is the For ring-opening step of the active site.

The protein belongs to the glucosamine/galactosamine-6-phosphate isomerase family. NagB subfamily.

The enzyme catalyses alpha-D-glucosamine 6-phosphate + H2O = beta-D-fructose 6-phosphate + NH4(+). Its pathway is amino-sugar metabolism; N-acetylneuraminate degradation; D-fructose 6-phosphate from N-acetylneuraminate: step 5/5. Catalyzes the reversible isomerization-deamination of glucosamine 6-phosphate (GlcN6P) to form fructose 6-phosphate (Fru6P) and ammonium ion. This is Glucosamine-6-phosphate deaminase from Clostridium botulinum (strain Loch Maree / Type A3).